The sequence spans 154 residues: dCTP deaminase (154 aa).

DCTP is bound by residues 79-84, aspartate 95, glutamine 124, and tyrosine 138; that span reads RSSLAR.

Belongs to the dCTP deaminase family. As to quaternary structure, homotrimer.

It carries out the reaction dCTP + H2O + H(+) = dUTP + NH4(+). Its pathway is pyrimidine metabolism; dUMP biosynthesis; dUMP from dCTP (dUTP route): step 1/2. Its function is as follows. Catalyzes the deamination of dCTP to dUTP. In Pyrococcus abyssi (strain GE5 / Orsay), this protein is dCTP deaminase.